The chain runs to 478 residues: Odorant receptor coreceptor (478 aa).

The Cytoplasmic segment spans residues 1 to 43 (MNVQPTKYHGLVLDLMPNIRLMQGFGHFLFRYVNGPVLIRKLY). The helical transmembrane segment at 44-64 (SWWNLIMILLQYFAIMGNLVM) threads the bilayer. Over 65 to 73 (NTGDVNELT) the chain is Extracellular. Residues 74–94 (ANTITTLFFTHSVTKFIYVAV) form a helical membrane-spanning segment. Over 95-133 (NSEHFYRTLGIWNQPNSHSLFAESDARYHSIALAKMRKL) the chain is Cytoplasmic. A helical membrane pass occupies residues 134–154 (LVMVMVTTVLSVVAWITITFF). The Extracellular portion of the chain corresponds to 155 to 187 (GDSVKNVFDKETNETYTVEIPRLPIKAWYPWDA). Residue N167 is glycosylated (N-linked (GlcNAc...) asparagine). A helical membrane pass occupies residues 188–208 (MSGVPYFFSFIYQAYFLLFSM). The Cytoplasmic portion of the chain corresponds to 209–343 (CQANLADVMF…VERHKHVVRL (135 aa)). A helical membrane pass occupies residues 344 to 364 (VSAIGETYGAALLLHMLTSTI). Residues 365–382 (KLTLLAYQATKIDALNVY) lie on the Extracellular side of the membrane. The chain crosses the membrane as a helical span at residues 383–403 (GLTVIGYLVYALAQVFLFCIF). At 404-454 (GNRLIEESSSVMEAAYSCHWYDGSEEAKTFVQIVCQQCQKAMTISGAKFFT) the chain is on the cytoplasmic side. A helical membrane pass occupies residues 455–475 (VSLDLFASVLGAVVTYFMVLV). Residues 476 to 478 (QLK) lie on the Extracellular side of the membrane.

This sequence belongs to the insect chemoreceptor superfamily. Heteromeric odorant receptor channel (TC 1.A.69) family. Orco subfamily. Heterodimer with conventional odorant receptors (ORs). Complexes exist early in the endomembrane system in olfactory sensory neurons (OSNs), coupling these complexes to the conserved ciliary trafficking pathway. As to expression, found specifically within most antennal and maxillary palp sensilla, as well as in a subset of proboscis sensilla.

It localises to the cell membrane. Functionally, odorant coreceptor which complexes with conventional odorant receptors (ORs) to form odorant-sensing units, providing sensitive and prolonged odorant signaling and calcium permeability. Orco is a universal and integral part of the functional odorant receptor, involved in the dendritic localization of other olfactory receptors. Plays a key role in preferred attraction of females for humans over non-human hosts for blood feeding. Human attraction plays a crucial role in the transmission of dengue and yellow fever by the mosquito. Also required for the response to the insect repellent IR3535; or to N,N-Diethyl-meta-toluamide (DEET), the most widely used insect repellent worldwide. In Aedes aegypti (Yellowfever mosquito), this protein is Odorant receptor coreceptor (SGPRor7).